The sequence spans 203 residues: Dephospho-CoA kinase (203 aa).

Residues 6–203 (RLGITGGIAC…SLLGRGGKGG (198 aa)) form the DPCK domain. 14–19 (ACGKSV) is a binding site for ATP.

Belongs to the CoaE family.

The protein localises to the cytoplasm. It catalyses the reaction 3'-dephospho-CoA + ATP = ADP + CoA + H(+). It functions in the pathway cofactor biosynthesis; coenzyme A biosynthesis; CoA from (R)-pantothenate: step 5/5. Its function is as follows. Catalyzes the phosphorylation of the 3'-hydroxyl group of dephosphocoenzyme A to form coenzyme A. The protein is Dephospho-CoA kinase of Thermosynechococcus vestitus (strain NIES-2133 / IAM M-273 / BP-1).